Consider the following 914-residue polypeptide: Eukaryotic initiation factor 4F subunit p130 (914 aa).

The segment covering 1–12 (MTDQRGPPPPHP) has biased composition (pro residues). Disordered stretches follow at residues 1 to 84 (MTDQ…YNNR), 128 to 205 (PPYT…NEAV), 240 to 351 (ERKK…VNKS), and 457 to 535 (IARN…LVPS). Over residues 26–44 (NQYSGANNSQPNNHYNENL) the composition is skewed to polar residues. The span at 59 to 73 (KNGKYGTNKYNNRNN) shows a compositional bias: low complexity. Serine 74 carries the phosphoserine modification. Positions 145–155 (PKTTKIEITTK) are enriched in low complexity. Positions 156–195 (TGERLNLKKFHEEKKASKGEEKNDGVEQKSKSGTPFEKEA) are enriched in basic and acidic residues. Threonine 196 carries the post-translational modification Phosphothreonine. The tract at residues 201–315 (ANEAVKDTLT…TGSVTKSVTF (115 aa)) is interaction with PAB1. Residues 240 to 263 (ERKKNGLISETEKKQETSNHDNTD) show a composition bias toward basic and acidic residues. Composition is skewed to polar residues over residues 298-325 (SVKTPQHVTGSVTKSVTFNEPENESSSQ) and 339-348 (ISDTTGGKTV). Threonine 301 carries the post-translational modification Phosphothreonine. Residues 496–529 (RMGDDRRSNRGYTSRKDREKAAEKAEEQAPKEEI) show a composition bias toward basic and acidic residues. The residue at position 503 (serine 503) is a Phosphoserine. Residues 567 to 810 (ERKMKSLLNK…IDVKELREIK (244 aa)) enclose the MIF4G domain. Positions 833-914 (QLRQKKNSQR…ALMNNDGDSD (82 aa)) are disordered. The span at 841–867 (QRSNSRFNNHNQSNSNRYSSNRRNMQN) shows a compositional bias: low complexity. Over residues 868–886 (TQRDSFASTKTGSFRNNQR) the composition is skewed to polar residues. Serine 913 carries the post-translational modification Phosphoserine.

The protein belongs to the eukaryotic initiation factor 4G family. As to quaternary structure, component of the eIF4F complex, which composition varies with external and internal environmental conditions. It is composed of at least eIF4A (TIF1/TIF2), eIF4E (TIF45) and eIF4G (TIF4631 or TIF4632). Interacts with PAT1 in a RNA-dependent manner.

It localises to the cytoplasm. Its function is as follows. Component of the eIF4F complex, which interacts with the mRNA cap structure and serves as an initial point of assembly for the translation apparatus. Stimulates translation by interaction with polyadenylate-binding protein PAB1, bringing the 5'- and 3'-ends of the mRNA in proximity. The formation of this circular mRNP structure appears to be critical for the synergistic effects of the cap and the poly(A) tail in facilitating translation initiation, recycling of ribosomes, and mRNA stability. TIF4632 is probably essential when TIF4631 is missing. The chain is Eukaryotic initiation factor 4F subunit p130 from Saccharomyces cerevisiae (strain ATCC 204508 / S288c) (Baker's yeast).